A 351-amino-acid polypeptide reads, in one-letter code: Dihydroorotate dehydrogenase (quinone) (351 aa).

FMN is bound by residues 65–69 and T89; that span reads AGLDK. K69 contributes to the substrate binding site. 114 to 118 contacts substrate; it reads NRLGF. Residues N150 and N183 each coordinate FMN. N183 contacts substrate. Catalysis depends on S186, which acts as the Nucleophile. Residue N188 participates in substrate binding. 2 residues coordinate FMN: K228 and T256. 257-258 is a binding site for substrate; it reads NT. FMN is bound by residues G279, G308, and 329 to 330; that span reads YT.

Belongs to the dihydroorotate dehydrogenase family. Type 2 subfamily. Monomer. It depends on FMN as a cofactor.

Its subcellular location is the cell membrane. It catalyses the reaction (S)-dihydroorotate + a quinone = orotate + a quinol. It participates in pyrimidine metabolism; UMP biosynthesis via de novo pathway; orotate from (S)-dihydroorotate (quinone route): step 1/1. In terms of biological role, catalyzes the conversion of dihydroorotate to orotate with quinone as electron acceptor. The sequence is that of Dihydroorotate dehydrogenase (quinone) from Acidovorax ebreus (strain TPSY) (Diaphorobacter sp. (strain TPSY)).